Here is an 85-residue protein sequence, read N- to C-terminus: Cloacin immunity protein (85 aa).

Lys12 is modified (N6-methyllysine).

It belongs to the cloacin immunity protein family.

In terms of biological role, this protein complexes with cloacin protein in equimolar amounts and inhibits it by binding with high affinity to the C-terminal catalytic domain of cloacin. The polypeptide is Cloacin immunity protein (cim) (Escherichia coli).